We begin with the raw amino-acid sequence, 39 residues long: MAGGGRIPLWIVATVAGTGVLVVVGLFFYGAYAGLGSSL.

A helical membrane pass occupies residues 7-27 (IPLWIVATVAGTGVLVVVGLF).

The protein belongs to the PsbJ family. As to quaternary structure, PSII is composed of 1 copy each of membrane proteins PsbA, PsbB, PsbC, PsbD, PsbE, PsbF, PsbH, PsbI, PsbJ, PsbK, PsbL, PsbM, PsbT, PsbX, PsbY, PsbZ, Psb30/Ycf12, peripheral proteins PsbO, CyanoQ (PsbQ), PsbU, PsbV and a large number of cofactors. It forms dimeric complexes.

It localises to the cellular thylakoid membrane. In terms of biological role, one of the components of the core complex of photosystem II (PSII). PSII is a light-driven water:plastoquinone oxidoreductase that uses light energy to abstract electrons from H(2)O, generating O(2) and a proton gradient subsequently used for ATP formation. It consists of a core antenna complex that captures photons, and an electron transfer chain that converts photonic excitation into a charge separation. This chain is Photosystem II reaction center protein J, found in Synechococcus elongatus (strain ATCC 33912 / PCC 7942 / FACHB-805) (Anacystis nidulans R2).